The sequence spans 2715 residues: G surface protein, allelic form 156 (2715 aa).

An N-terminal signal peptide occupies residues 1–20; it reads MNNKFIIFSLLLALVASQTY. PSA repeat units follow at residues 111-171, 177-237, 243-303, 309-366, 372-404, 405-467, 473-530, 536-596, 602-673, 688-748, 752-812, 820-895, 934-1001, 1008-1067, 1073-1141, 1147-1215, 1221-1289, 1295-1363, 1369-1437, 1443-1507, 1513-1578, 1586-1652, 1693-1751, 1759-1819, 1827-1898, 1904-1976, 1984-2044, 2080-2149, 2155-2215, 2219-2286, 2290-2355, 2359-2430, 2434-2500, and 2505-2573; these read KTLD…NTCD, FATD…RICD, LTTD…KACA, IATN…KTCA, NNTH…APTT, MTTN…KTCV, NTTH…KQCV, TTTH…KACS, FTTT…KSCA, GFTF…KTCA, QTTH…ATCA, YDSD…GACT, GLTF…AECA, GLDH…SNCA, GLTT…THCP, GLTD…TECA, GLTN…TECA, GLTK…LNCS, GFVH…TDCA, TITF…ATCD, TFNH…KTCD, RDDD…LNCG, YDTH…KSCT, TTTH…KSCA, YDDD…KSCD, FATD…KNCS, LTSE…KDCQ, GTTH…TSCK, WNND…TSCA, YTTH…QSCA, GTTH…LTCA, and GTAT…TACT.

It localises to the cell membrane. This protein is the surface antigen or immobilization antigen of Paramecium primaurelia. This chain is G surface protein, allelic form 156 (156G), found in Paramecium primaurelia.